The following is a 271-amino-acid chain: Uridine-cytidine kinase 1-B (271 aa).

Position 24–32 (24–32 (GGTASGKST)) interacts with ATP. Residues D81, Y109, H114, R163, R172, and Q180 each coordinate substrate. D209 provides a ligand contact to ATP. The segment at 240-271 (RSQKRTLPGQGDSGGLLLQGKRTHLESSSRPH) is disordered. Residues 246-259 (LPGQGDSGGLLLQG) show a composition bias toward low complexity. Residues 262–271 (THLESSSRPH) show a composition bias toward basic and acidic residues.

The protein belongs to the uridine kinase family.

It catalyses the reaction uridine + ATP = UMP + ADP + H(+). It carries out the reaction cytidine + ATP = CMP + ADP + H(+). It functions in the pathway pyrimidine metabolism; CTP biosynthesis via salvage pathway; CTP from cytidine: step 1/3. Its pathway is pyrimidine metabolism; UMP biosynthesis via salvage pathway; UMP from uridine: step 1/1. Phosphorylates uridine and cytidine to uridine monophosphate and cytidine monophosphate. Does not phosphorylate deoxyribonucleosides or purine ribonucleosides. Can use ATP or GTP as a phosphate donor. The polypeptide is Uridine-cytidine kinase 1-B (uck1-b) (Xenopus laevis (African clawed frog)).